Here is a 302-residue protein sequence, read N- to C-terminus: Syntaxin-17 (302 aa).

Residue Ser-2 is modified to N-acetylserine. Topologically, residues 2–228 (SEDEEKVKLR…KNLGKAAKYK (227 aa)) are cytoplasmic. Residue Lys-41 is modified to N6-acetyllysine. Residues 53–123 (EEHINAGRTV…EELKKQFNDE (71 aa)) adopt a coiled-coil conformation. Position 157 is a phosphotyrosine; by ABL1 (Tyr-157). One can recognise a t-SNARE coiled-coil homology domain in the interval 162–224 (IPQDQNAAES…EEGTKNLGKA (63 aa)). Residues 229–249 (LAALPVAGALIGGMVGGPIGL) form a helical membrane-spanning segment. The tract at residues 229–275 (LAALPVAGALIGGMVGGPIGLLAGFKVAGIAAALGGGVLGFTGGKLI) is necessary and sufficient for localization to autophagosome. Topologically, residues 250-254 (LAGFK) are lumenal. Residues 255 to 275 (VAGIAAALGGGVLGFTGGKLI) traverse the membrane as a helical segment. At 276–302 (QRKKQKMMEKLTSSCPDLPSQTDKKCS) the chain is on the cytoplasmic side. A Phosphoserine modification is found at Ser-289. The Endoplasmic reticulum retention signal motif lies at 299–302 (KKCS).

It belongs to the syntaxin family. In terms of assembly, forms a SNARE complex composed of VAMP8, SNAP29 and STX17 involved in fusion of autophagosome with lysosome. Interacts with VAMP7 and VTI1B. Probably interacts with BET1, SCFD1 and SEC22B. Interacts with PTPN2 and ABL1; involved in STX17 phosphorylation. Interacts with COPB1. Interacts with TMED9 and TMED10; the interaction is direct. Interacts with ATG14. Interacts with RUBCNL/PACER; promoting targeting of RUBCNL/PACER to autophagosome. Interacts with VAMP8, SNAP29, VPS39 and VPS41; these interactions are increased in the absence of TMEM39A. Interacts with IRGM; promoting STX17 recruitment to autophagosomes. Interacts with ATG8 proteins GABARAP and MAP1LC3B. Interacts with RNF115; this interaction enhances STX17 stability which in turn promotes autophagosome maturation. Interacts with RAB39A (GTP-bound); the interaction promotes autophagosome-lysosome membrane fusion driven by STX17-SNAP29-VAMP8. Interacts with RAB39B; the interaction may promote a different fonction in autophagy as compared with RAB39A. As to quaternary structure, (Microbial infection) The interactions with VAMP8, SNAP29 and VPS41 are decreased in presence of SARS coronavirus-2/SARS-CoV-2 ORF3A protein. Phosphorylated at Tyr-157 probably by ABL1. Dephosphorylation by PTPN2; regulates exit from the endoplasmic reticulum. In terms of processing, (Microbial infection) Cleaved by the L.pneumophila serine protease Lpg1137, impairing endoplasmic reticulum-mitochondria communication, leading to inhibit autophagy.

It is found in the endoplasmic reticulum membrane. The protein localises to the smooth endoplasmic reticulum membrane. Its subcellular location is the endoplasmic reticulum-Golgi intermediate compartment membrane. The protein resides in the cytoplasmic vesicle. It localises to the autophagosome membrane. It is found in the COPII-coated vesicle membrane. The protein localises to the cytoplasm. Its subcellular location is the cytosol. The protein resides in the mitochondrion membrane. It localises to the autolysosome membrane. Its function is as follows. SNAREs, soluble N-ethylmaleimide-sensitive factor-attachment protein receptors, are essential proteins for fusion of cellular membranes. SNAREs localized on opposing membranes assemble to form a trans-SNARE complex, an extended, parallel four alpha-helical bundle that drives membrane fusion. STX17 is a SNARE of the autophagosome involved in autophagy through the direct control of autophagosome membrane fusion with the lysosome membrane. May also play a role in the early secretory pathway where it may maintain the architecture of the endoplasmic reticulum-Golgi intermediate compartment/ERGIC and Golgi and/or regulate transport between the endoplasmic reticulum, the ERGIC and the Golgi. The sequence is that of Syntaxin-17 from Homo sapiens (Human).